A 1070-amino-acid chain; its full sequence is DNA-directed RNA polymerase subunit beta (1070 aa).

The protein belongs to the RNA polymerase beta chain family. As to quaternary structure, in plastids the minimal PEP RNA polymerase catalytic core is composed of four subunits: alpha, beta, beta', and beta''. When a (nuclear-encoded) sigma factor is associated with the core the holoenzyme is formed, which can initiate transcription.

It is found in the plastid. It localises to the chloroplast. The catalysed reaction is RNA(n) + a ribonucleoside 5'-triphosphate = RNA(n+1) + diphosphate. DNA-dependent RNA polymerase catalyzes the transcription of DNA into RNA using the four ribonucleoside triphosphates as substrates. The polypeptide is DNA-directed RNA polymerase subunit beta (Cucumis sativus (Cucumber)).